The chain runs to 1463 residues: Secretory phospholipase A2 receptor (1463 aa).

Residues 1-20 form the signal peptide; sequence MLLSPSLLLLLLLGAPRGCA. The Extracellular portion of the chain corresponds to 21–1397; it reads EGVAAALTPE…ALPEKGPSHS (1377 aa). The region spanning 38-161 is the Ricin B-type lectin domain; the sequence is KGIFVIQSES…GSGGGDICEY (124 aa). Intrachain disulfides connect Cys-51-Cys-64, Cys-89-Cys-106, Cys-178-Cys-204, Cys-192-Cys-219, Cys-260-Cys-354, Cys-330-Cys-346, Cys-406-Cys-501, Cys-478-Cys-493, Cys-617-Cys-634, Cys-699-Cys-796, Cys-774-Cys-788, Cys-840-Cys-937, Cys-914-Cys-929, and Cys-1067-Cys-1087. An N-linked (GlcNAc...) asparagine glycan is attached at Asn-93. The 49-residue stretch at 173-221 folds into the Fibronectin type-II domain; it reads THGMPCMFPFQYNHQWHHECTREGREDDLLWCATTSRYERDEKWGFCPD. 8 consecutive C-type lectin domains span residues 238-355, 385-502, 522-643, 673-797, 819-938, 965-1096, 1121-1232, and 1257-1378; these read NSHI…YICK, YNRN…YICK, HGGF…MSLC, GLAS…WICK, YQDA…SICK, FNYK…GFVC, YGNR…GAIC, and FKSN…FICK. A glycan (N-linked (GlcNAc...) asparagine) is linked at Asn-454. An N-linked (GlcNAc...) asparagine glycan is attached at Asn-1123. Cystine bridges form between Cys-1209-Cys-1223, Cys-1280-Cys-1377, and Cys-1354-Cys-1369. Residues 1398–1418 traverse the membrane as a helical segment; sequence IIPLAVVLTLIVIVAICTLSF. Over 1419-1463 the chain is Cytoplasmic; that stretch reads CIYKHNGGFFRRLAGFRNPYYPATNFSTVYLEENILISDLEKSDQ. Residues 1436–1442 carry the Endocytosis signal motif; it reads NPYYPAT.

Interacts with sPLA2-IB/PLA2G1B; this interaction mediates intracellular signaling as well as clearance of extracellular sPLA2-IB/PLA2G1B via endocytotic pathway. Interacts with sPLA2-X/PLA2G10; this interaction mediates sPLA2-X/PLA2G10 clearance and inactivation. Post-translationally, the secretory phospholipase A2 receptor form may be produced by the action of metalloproteinases. It contains all extracellular domains and only lacks transmembrane and cytosolic regions. It is however unclear whether this form is produced by proteolytic cleavage as suggested by some experiments, or by alternative splicing, as in the case of isoform 2 that shares all characteristics of secretory phospholipase A2 receptor form. As to expression, expressed in podocytes (at protein level). Present in lung macrophage (at protein level). Highly expressed in kidney. Also expressed in pancreas, amnion, choriodecidua and placenta. Isoform 2 is expressed at much lower level.

The protein resides in the cell membrane. Its subcellular location is the secreted. In terms of biological role, receptor for secretory phospholipase A2 (sPLA2). Acts as a receptor for phospholipase sPLA2-IB/PLA2G1B but not sPLA2-IIA/PLA2G2A. Also able to bind to snake PA2-like toxins. Although its precise function remains unclear, binding of sPLA2 to its receptor participates in both positive and negative regulation of sPLA2 functions as well as clearance of sPLA2. Binding of sPLA2-IB/PLA2G1B induces various effects depending on the cell type, such as activation of the mitogen-activated protein kinase (MAPK) cascade to induce cell proliferation, the production of lipid mediators, selective release of arachidonic acid in bone marrow-derived mast cells. In neutrophils, binding of sPLA2-IB/PLA2G1B can activate p38 MAPK to stimulate elastase release and cell adhesion. May be involved in responses in pro-inflammatory cytokine productions during endotoxic shock. Also has endocytic properties and rapidly internalizes sPLA2 ligands, which is particularly important for the clearance of extracellular sPLA2s to protect their potent enzymatic activities. The soluble secretory phospholipase A2 receptor form is circulating and acts as a negative regulator of sPLA2 functions by blocking the biological functions of sPLA2-IB/PLA2G1B. In podocytes, binding of sPLA2-IB/PLA2G1B can regulate podocyte survival and glomerular homeostasis. In Homo sapiens (Human), this protein is Secretory phospholipase A2 receptor (PLA2R1).